Here is a 91-residue protein sequence, read N- to C-terminus: DNA-directed RNA polymerase subunit omega (91 aa).

The protein belongs to the RNA polymerase subunit omega family. In terms of assembly, the RNAP catalytic core consists of 2 alpha, 1 beta, 1 beta' and 1 omega subunit. When a sigma factor is associated with the core the holoenzyme is formed, which can initiate transcription. The rRNA transcription and antitermination complex (rrnTAC) consists of RNAP, NusA, NusB, NusE (rpsJ), NusG, SubB, ribosomal protein S4, DNA and precursor rRNA; S4 is more flexible than other subunits.

The catalysed reaction is RNA(n) + a ribonucleoside 5'-triphosphate = RNA(n+1) + diphosphate. Promotes RNA polymerase (RNAP) assembly. Latches the N- and C-terminal regions of the beta' subunit thereby facilitating its interaction with the beta and alpha subunits. In terms of biological role, part of the processive rRNA transcription and antitermination complex (rrnTAC). The complex forms an RNA-chaperone ring around the RNA exit tunnel of RNAP. It supports rapid transcription and antitermination of rRNA operons, cotranscriptional rRNA folding, and annealing of distal rRNA regions to allow correct ribosome biogenesis. The protein is DNA-directed RNA polymerase subunit omega (rpoZ) of Escherichia coli (strain K12).